We begin with the raw amino-acid sequence, 1202 residues long: Nitric oxide synthase 3 (1202 aa).

A disordered region spans residues 1–70; sequence MGNLKSVGQE…PPDGPKFPRV (70 aa). The N-myristoyl glycine moiety is linked to residue Gly2. 2 S-palmitoyl cysteine lipidation sites follow: Cys15 and Cys26. The segment covering 15 to 27 has biased composition (gly residues); sequence CGLGLGLGLGLCG. Positions 33–65 are enriched in pro residues; it reads SPAPEPSQAPVPPSPTRPAPDHSPPLTRPPDGP. The Zn(2+) site is built by Cys93 and Cys98. An interaction with NOSIP region spans residues 97 to 485; the sequence is RCLGSLVFPR…PDPWKGSAAK (389 aa). Residue Ser101 coordinates (6R)-L-erythro-5,6,7,8-tetrahydrobiopterin. Residue Cys183 coordinates heme b. Residues Gln246, Trp355, Tyr356, and Glu360 each contribute to the L-arginine site. (6R)-L-erythro-5,6,7,8-tetrahydrobiopterin is bound by residues Ala445, Trp446, and Phe459. Tyr474 provides a ligand contact to heme b. The interval 489–509 is calmodulin-binding; sequence ITRKKTFKEVANAVKISASLM. A Phosphothreonine; by AMPK modification is found at Thr494. The Flavodoxin-like domain occupies 519–702; sequence ATILYGSETG…AFRGWAQAAF (184 aa). FMN is bound by residues Ser525, Glu526, Thr527, Arg529, Ser571, and Thr572. A phosphoserine mark is found at Ser614, Ser632, and Ser637. The FMN site is built by Ser653, Cys660, Glu686, and Gln690. One can recognise an FAD-binding FR-type domain in the interval 755–1001; the sequence is RKMFQATILS…IRGAPSFRLP (247 aa). Arg775 is a binding site for NADP(+). Position 797 (His797) interacts with FAD. A disordered region spans residues 817-843; it reads EDPPPSTEPVAVEQLEKGSPGGPPPGW. Ser835 carries the phosphoserine modification. The FAD site is built by Arg937, Tyr939, Ser940, Thr955, Ala957, Tyr961, Val974, Cys975, and Ser976. The NADP(+) site is built by Thr1015, Arg1048, Ser1077, Arg1078, Lys1084, Tyr1086, and Gln1088. Position 1174 is a phosphothreonine (Thr1174). Ser1176 is modified (phosphoserine; by AMPK). Ser1178 carries the post-translational modification Phosphoserine.

This sequence belongs to the NOS family. Homodimer. Interacts with NOSIP and NOSTRIN. Interacts with HSP90AB1. Forms a complex with ASL, ASS1 and SLC7A1; the complex regulates cell-autonomous L-arginine synthesis and citrulline recycling while channeling extracellular L-arginine to nitric oxide synthesis pathway. Heme b is required as a cofactor. The cofactor is FAD. It depends on FMN as a cofactor. Requires (6R)-L-erythro-5,6,7,8-tetrahydrobiopterin as cofactor. In terms of processing, phosphorylation by AMPK at Ser-1176 in the presence of Ca(2+)-calmodulin (CaM) activates activity. In absence of Ca(2+)-calmodulin, AMPK also phosphorylates Thr-494, resulting in inhibition of activity. As to expression, expressed constitutively by vascular endothelium. Detected in alveolar and serosal epithelial cells as well as in endothelial cells in one day old rat. In adult lung, detected in rare endothelial cells.

Its subcellular location is the membrane. The protein resides in the caveola. The protein localises to the cytoplasm. It is found in the cytoskeleton. It localises to the golgi apparatus. Its subcellular location is the cell membrane. The catalysed reaction is 2 L-arginine + 3 NADPH + 4 O2 + H(+) = 2 L-citrulline + 2 nitric oxide + 3 NADP(+) + 4 H2O. Stimulated by calcium/calmodulin. Inhibited by NOSIP and NOSTRIN. Functionally, produces nitric oxide (NO) which is implicated in vascular smooth muscle relaxation through a cGMP-mediated signal transduction pathway. NO mediates vascular endothelial growth factor (VEGF)-induced angiogenesis in coronary vessels and promotes blood clotting through the activation of platelets. In Rattus norvegicus (Rat), this protein is Nitric oxide synthase 3.